The chain runs to 545 residues: Chaperonin GroEL (545 aa).

Residues 30–33 (TLGP), lysine 51, 87–91 (DGTTT), glycine 415, 479–481 (NAA), and aspartate 495 each bind ATP. Residues 526–545 (KEDKPDLGNAGAGGNMGGMM) are disordered. Over residues 535–545 (AGAGGNMGGMM) the composition is skewed to gly residues.

Belongs to the chaperonin (HSP60) family. As to quaternary structure, forms a cylinder of 14 subunits composed of two heptameric rings stacked back-to-back. Interacts with the co-chaperonin GroES.

Its subcellular location is the cytoplasm. The catalysed reaction is ATP + H2O + a folded polypeptide = ADP + phosphate + an unfolded polypeptide.. In terms of biological role, together with its co-chaperonin GroES, plays an essential role in assisting protein folding. The GroEL-GroES system forms a nano-cage that allows encapsulation of the non-native substrate proteins and provides a physical environment optimized to promote and accelerate protein folding. The sequence is that of Chaperonin GroEL from Blochmanniella pennsylvanica (strain BPEN).